The following is a 178-amino-acid chain: MLPSGKSIRILGIDPGLRITGFGVIEKNGSQLTYLGSGCVVTEKSGLPDRLKTILDGLNEIILQHQPEQVAVEQVFVNINPKSTLLLGQARGAAISAAVLHELSVYEYTALQIKQSVVGNGHARKEQVQEMVMRLLRLGERPRPDAADALACAICHAHGGTGLLALSVRNHLKRGGCP.

Residues aspartate 14, glutamate 73, and aspartate 145 contribute to the active site. Aspartate 14, glutamate 73, and aspartate 145 together coordinate Mg(2+).

The protein belongs to the RuvC family. In terms of assembly, homodimer which binds Holliday junction (HJ) DNA. The HJ becomes 2-fold symmetrical on binding to RuvC with unstacked arms; it has a different conformation from HJ DNA in complex with RuvA. In the full resolvosome a probable DNA-RuvA(4)-RuvB(12)-RuvC(2) complex forms which resolves the HJ. Mg(2+) is required as a cofactor.

It localises to the cytoplasm. The enzyme catalyses Endonucleolytic cleavage at a junction such as a reciprocal single-stranded crossover between two homologous DNA duplexes (Holliday junction).. The RuvA-RuvB-RuvC complex processes Holliday junction (HJ) DNA during genetic recombination and DNA repair. Endonuclease that resolves HJ intermediates. Cleaves cruciform DNA by making single-stranded nicks across the HJ at symmetrical positions within the homologous arms, yielding a 5'-phosphate and a 3'-hydroxyl group; requires a central core of homology in the junction. The consensus cleavage sequence is 5'-(A/T)TT(C/G)-3'. Cleavage occurs on the 3'-side of the TT dinucleotide at the point of strand exchange. HJ branch migration catalyzed by RuvA-RuvB allows RuvC to scan DNA until it finds its consensus sequence, where it cleaves and resolves the cruciform DNA. In Nitrosomonas eutropha (strain DSM 101675 / C91 / Nm57), this protein is Crossover junction endodeoxyribonuclease RuvC.